The primary structure comprises 290 residues: PIH1 domain-containing protein 1 (290 aa).

Serine 12, serine 16, and serine 173 each carry phosphoserine.

It belongs to the PIH1 family. As to quaternary structure, component of the R2TP complex composed at least of RUVBL1, RUVBL2, RPAP3 and PIHD1. Component of the PAQosome complex which is responsible for the biogenesis of several protein complexes and which consists of R2TP complex members RUVBL1, RUVBL2, RPAP3 and PIH1D1, URI complex members PFDN2, PFDN6, PDRG1, UXT and URI1 as well as ASDURF, POLR2E and DNAAF10/WDR92. Interacts with phosphorylated TELO2. Mediates interaction of TELO2 with the R2TP complex. Interacts with phosphorylated ECD, EFTUD2/SNRP116, RPB1 and UBR5 and with RPB1 in a phosphorylation-independent manner. Interacts with the core C/D box snoRNP particle components NOP58 and FBL and with RUVBL1/TIP49. Interacts with RPAP3 and DNAAF10. Interacts with histone H4 and with SWI/SNF complex member SMARCB1/SNF5. Interacts with the mTORC1 complex member RPTOR. Interacts with isoform 1 of MSL1.

The protein resides in the nucleus. Its function is as follows. Involved in the assembly of C/D box small nucleolar ribonucleoprotein (snoRNP) particles. Recruits the SWI/SNF complex to the core promoter of rRNA genes and enhances pre-rRNA transcription. Mediates interaction of TELO2 with the R2TP complex which is necessary for the stability of MTOR and SMG1. Positively regulates the assembly and activity of the mTORC1 complex. This is PIH1 domain-containing protein 1 (Pih1d1) from Mus musculus (Mouse).